An 820-amino-acid chain; its full sequence is Leucine-rich repeat and guanylate kinase domain-containing protein (820 aa).

A compositionally biased stretch (basic and acidic residues) spans 72–83; sequence EAEAEQEEKQQE. The interval 72-96 is disordered; that stretch reads EAEAEQEEKQQEDGESEESEESEMQ. Residues 84–94 show a composition bias toward acidic residues; sequence DGESEESEESE. LRR repeat units lie at residues 129–149, 150–171, 172–193, 194–215, 216–237, 238–259, 260–280, 281–302, and 303–324; these read YLNL…CGYV, HLQK…SCMP, YLLE…KPPQ, NLKK…SAYH, TLTQ…ENCI, SLTH…GTLP, IKVL…EELK, ALQN…ENHD, and LLEV…EYIE. The region spanning 337–375 is the LRRCT domain; the sequence is NPIQTKPEYWFFVIYMLLRLTELDQQKIKVEEKVFAVNK. Positions 414–597 constitute a Guanylate kinase-like domain; it reads YPMLILTGPA…AYQKLSELIR (184 aa). 421-428 serves as a coordination point for ATP; sequence GPAACGKR. The segment at 800–820 is disordered; sequence TIMDPGSNTKPTLPPIPHGRR. The segment covering 811–820 has biased composition (pro residues); the sequence is TLPPIPHGRR.

Interacts (via guanylate kinase-like domain) with RIMBP3 (via coiled-coil region). Interacts (via guanylate kinase-like domain) with HOOK2. Interacts (via LRRCT domain) with KLC3. Interacts with HOOK1 and HOOK3. Highly expressed in the testis. During spermatid development is initially localized to a supra-nuclear region of round spermatids, and is particularly evident at the leading edge of the developing acrosome and acroplaxome. As maturation proceeded and nuclear elongation initiated, LRGUK moves distally to ultimately reside on the microtubules of the manchette. LRGUK is also evident in the sperm basal body and the sperm tail.

The protein localises to the cytoplasmic vesicle. It is found in the secretory vesicle. Its subcellular location is the acrosome. It localises to the cytoplasm. The protein resides in the cytoskeleton. The protein localises to the cilium basal body. Functionally, involved in multiple aspects of sperm assembly including acrosome attachment, shaping of the sperm head and in the early aspects of axoneme development. Not essential for primary cilium biogenesis. The polypeptide is Leucine-rich repeat and guanylate kinase domain-containing protein (Lrguk) (Mus musculus (Mouse)).